The sequence spans 234 residues: Large ribosomal subunit protein uL1 (234 aa).

It belongs to the universal ribosomal protein uL1 family. As to quaternary structure, part of the 50S ribosomal subunit.

Functionally, binds directly to 23S rRNA. The L1 stalk is quite mobile in the ribosome, and is involved in E site tRNA release. In terms of biological role, protein L1 is also a translational repressor protein, it controls the translation of the L11 operon by binding to its mRNA. The polypeptide is Large ribosomal subunit protein uL1 (Serratia marcescens).